A 310-amino-acid chain; its full sequence is Beta-lactamase AST-1 (310 aa).

The first 31 residues, M1–A31, serve as a signal peptide directing secretion. C32 is lipidated: N-palmitoyl cysteine. The S-diacylglycerol cysteine moiety is linked to residue C32. The active-site Acyl-ester intermediate is S91. Position 151 (S151) interacts with substrate. Catalysis depends on E187, which acts as the Proton acceptor. K255–G257 provides a ligand contact to substrate.

The protein belongs to the class-A beta-lactamase family.

The protein localises to the cell membrane. The enzyme catalyses a beta-lactam + H2O = a substituted beta-amino acid. Its activity is regulated as follows. Inhibited by clavulanic acid. Confers high levels of resistance to amoxicillin, benzylpenicillin, piperacillin, ticarcillin and cephalothin. Not active against ceftazidime, cefotaxime and aztreonam. In Nocardia asteroides, this protein is Beta-lactamase AST-1 (bla).